Here is a 92-residue protein sequence, read N- to C-terminus: Phosphoribosyl-ATP pyrophosphatase (92 aa).

Belongs to the PRA-PH family.

The protein resides in the cytoplasm. The enzyme catalyses 1-(5-phospho-beta-D-ribosyl)-ATP + H2O = 1-(5-phospho-beta-D-ribosyl)-5'-AMP + diphosphate + H(+). Its pathway is amino-acid biosynthesis; L-histidine biosynthesis; L-histidine from 5-phospho-alpha-D-ribose 1-diphosphate: step 2/9. This Leptospira biflexa serovar Patoc (strain Patoc 1 / ATCC 23582 / Paris) protein is Phosphoribosyl-ATP pyrophosphatase.